Consider the following 171-residue polypeptide: Large ribosomal subunit protein uL10 (171 aa).

It belongs to the universal ribosomal protein uL10 family. Part of the ribosomal stalk of the 50S ribosomal subunit. The N-terminus interacts with L11 and the large rRNA to form the base of the stalk. The C-terminus forms an elongated spine to which L12 dimers bind in a sequential fashion forming a multimeric L10(L12)X complex.

In terms of biological role, forms part of the ribosomal stalk, playing a central role in the interaction of the ribosome with GTP-bound translation factors. The protein is Large ribosomal subunit protein uL10 of Nitrosomonas europaea (strain ATCC 19718 / CIP 103999 / KCTC 2705 / NBRC 14298).